A 104-amino-acid polypeptide reads, in one-letter code: UPF0473 protein SH1304 (104 aa).

Belongs to the UPF0473 family.

This Staphylococcus haemolyticus (strain JCSC1435) protein is UPF0473 protein SH1304.